Here is a 225-residue protein sequence, read N- to C-terminus: UPF0128 protein PH1314 (225 aa).

Belongs to the UPF0128 family.

The chain is UPF0128 protein PH1314 from Pyrococcus horikoshii (strain ATCC 700860 / DSM 12428 / JCM 9974 / NBRC 100139 / OT-3).